A 185-amino-acid chain; its full sequence is Serine/arginine-rich splicing factor RSZ21A (185 aa).

The RRM domain maps to alanine 2–serine 73. The segment at serine 87 to leucine 104 adopts a CCHC-type zinc-finger fold. Residues glycine 109–serine 185 form a disordered region. The span at glycine 114–arginine 131 shows a compositional bias: basic residues. 2 stretches are compositionally biased toward low complexity: residues serine 132 to arginine 145 and valine 152 to serine 163.

It belongs to the splicing factor SR family. Post-translationally, extensively phosphorylated on serine residues in the RS domain. Expressed in roots, leaves and immature seeds.

It is found in the nucleus. Its function is as follows. Involved in pre-mRNA splicing. This Oryza sativa subsp. japonica (Rice) protein is Serine/arginine-rich splicing factor RSZ21A (RSZ21A).